The primary structure comprises 333 residues: Cap-specific mRNA (nucleoside-2'-O-)-methyltransferase (333 aa).

MRNA is bound at residue Tyr-22. 8 residues coordinate S-adenosyl-L-methionine: Gln-39, Tyr-66, Gly-68, Gly-72, Asp-95, Arg-97, Val-116, and Asp-138. The binding to NPH-I stretch occupies residues 169 to 249 (PVASSLKWRC…NKIVRNKVVV (81 aa)). Positions 169–333 (PVASSLKWRC…NSKRSVRGNK (165 aa)) are binding to Rap94. Lys-175 functions as the For methyltransferase activity in the catalytic mechanism. Residues 177-180 (RCPF), Asp-182, 205-207 (SAE), and Glu-233 contribute to the mRNA site.

Belongs to the class I-like SAM-binding methyltransferase superfamily. Poxvirus/kinetoplastid 2'-O-MTase family. In terms of assembly, interacts with poly(A) polymerase catalytic subunit OPG063. Interacts with OPG109 and OPG123; these interactions might help linking transcription to capping and polyadenylation.

It is found in the virion. The enzyme catalyses a 5'-end (N(7)-methyl 5'-triphosphoguanosine)-ribonucleoside in mRNA + S-adenosyl-L-methionine = a 5'-end (N(7)-methyl 5'-triphosphoguanosine)-(2'-O-methyl-ribonucleoside) in mRNA + S-adenosyl-L-homocysteine + H(+). Functionally, displays methyltransferase, positive regulation of the poly(A) polymerase and transcription elongation activities. Involved in the modification of both mRNA ends and in intermediate and late gene positive transcription elongation. At the mRNAs 5' end, methylates the ribose 2' OH group of the first transcribed nucleotide, thereby producing a 2'-O-methylpurine cap. At the 3' end, functions as a processivity factor which stimulates the activity of the viral poly(A) polymerase OPG063 that creates mRNA's poly(A) tail. In the presence of OPG102, OPG063 does not dissociate from the RNA allowing tail elongation to around 250 adenylates. The polypeptide is Cap-specific mRNA (nucleoside-2'-O-)-methyltransferase (OPG102) (Homo sapiens (Human)).